Consider the following 749-residue polypeptide: Probable serine/threonine-protein kinase fhkD (749 aa).

The FHA domain occupies 47 to 150; that stretch reads IFFGRNPKRC…NGTFVKGCIL (104 aa). The span at 84 to 126 shows a compositional bias: low complexity; it reads NNNNNDGDNNNNNNNNNNNNNNNNNNNNNNNNNNNNNNNNNNN. The segment at 84-130 is disordered; sequence NNNNNDGDNNNNNNNNNNNNNNNNNNNNNNNNNNNNNNNNNNNTTKN. The Protein kinase domain maps to 199–472; it reads YSIQGILGTG…TKGALSHDWF (274 aa). ATP-binding positions include 205-213 and Lys-228; that span reads LGTGNFSVV. Asp-323 (proton acceptor) is an active-site residue. 2 disordered regions span residues 512–620 and 640–749; these read NIPM…PAII and CTPT…LKGS. Residues 516-561 show a composition bias toward low complexity; it reads TLNSTTTNTTSPNNNNNNNNNNNNKNNNKNIIKSLNSNSNNYNNNS. A compositionally biased stretch (polar residues) spans 562 to 572; sequence VLKKTSQSPKT. Low complexity-rich tracts occupy residues 590 to 611 and 651 to 667; these read NNNN…NNNN and TNST…TSNS. Over residues 668-687 the composition is skewed to polar residues; that stretch reads VTMGTSSTSIPVSNSITMKS. The span at 696–707 shows a compositional bias: basic and acidic residues; the sequence is DGDKKRKEKESS. Positions 708-739 are enriched in low complexity; that stretch reads SSENVNDVIVINSNNHNNNNNNNHNINNGISS.

Belongs to the protein kinase superfamily. CAMK Ser/Thr protein kinase family. CHK2 subfamily.

It carries out the reaction L-seryl-[protein] + ATP = O-phospho-L-seryl-[protein] + ADP + H(+). It catalyses the reaction L-threonyl-[protein] + ATP = O-phospho-L-threonyl-[protein] + ADP + H(+). In Dictyostelium discoideum (Social amoeba), this protein is Probable serine/threonine-protein kinase fhkD (fhkD).